Here is a 432-residue protein sequence, read N- to C-terminus: Probable M18 family aminopeptidase 2 (432 aa).

Zn(2+)-binding residues include His-86, His-157, and His-408.

This sequence belongs to the peptidase M18 family. Zn(2+) serves as cofactor.

The polypeptide is Probable M18 family aminopeptidase 2 (Streptomyces avermitilis (strain ATCC 31267 / DSM 46492 / JCM 5070 / NBRC 14893 / NCIMB 12804 / NRRL 8165 / MA-4680)).